The sequence spans 159 residues: Large ribosomal subunit protein uL10 (159 aa).

This sequence belongs to the universal ribosomal protein uL10 family. Part of the ribosomal stalk of the 50S ribosomal subunit. The N-terminus interacts with L11 and the large rRNA to form the base of the stalk. The C-terminus forms an elongated spine to which L12 dimers bind in a sequential fashion forming a multimeric L10(L12)X complex.

Forms part of the ribosomal stalk, playing a central role in the interaction of the ribosome with GTP-bound translation factors. The sequence is that of Large ribosomal subunit protein uL10 (rplJ) from Campylobacter jejuni subsp. jejuni serotype O:2 (strain ATCC 700819 / NCTC 11168).